The following is a 612-amino-acid chain: Cytoplasmic dynein 1 intermediate chain 2 (612 aa).

2 stretches are compositionally biased toward basic and acidic residues: residues 1-13 (MSDK…ELER) and 20-43 (QIRE…KKEA). Disordered stretches follow at residues 1 to 117 (MSDK…MAKI) and 129 to 188 (TYTK…EEKQ). An N-acetylserine modification is found at serine 2. Serine 51 carries the diphosphoserine modification. Serine 51 and serine 84 each carry phosphoserine. Residues 82-91 (PSSKSVSTPS) are compositionally biased toward low complexity. Threonine 89 is subject to Phosphothreonine. Phosphoserine occurs at positions 91, 95, and 98. Residues 164-188 (EKTLKKDEESDSKAPPHELTEEEKQ) are compositionally biased toward basic and acidic residues. 7 WD repeats span residues 251–300 (SKHR…TTPE), 304–344 (HCQS…RTPV), 353–394 (AHTH…HPQD), 403–443 (SKAV…AGIS), 448–493 (GHQG…PLYS), 496–536 (DNSD…EVPT), and 542–581 (EGNP…AVPR).

This sequence belongs to the dynein intermediate chain family. Homodimer. The cytoplasmic dynein 1 complex consists of two catalytic heavy chains (HCs) and a number of non-catalytic subunits presented by intermediate chains (ICs), light intermediate chains (LICs) and light chains (LCs); the composition seems to vary in respect to the IC, LIC and LC composition. The heavy chain homodimer serves as a scaffold for the probable homodimeric assembly of the respective non-catalytic subunits. The ICs and LICs bind directly to the HC dimer and the LCs assemble on the IC dimer. Interacts with DYNLT3. Interacts with DYNLT1. Interacts (dephosphorylated at Ser-84) with DCTN1. Interacts with BICD2. Interacts with SPEF2. Interacts with CFAP61. The phosphorylation status of Ser-84 appears to be involved in dynactin-dependent target binding. In terms of processing, pyrophosphorylation by 5-diphosphoinositol pentakisphosphate (5-IP7) promotes interaction with DCTN1. Serine pyrophosphorylation is achieved by Mg(2+)-dependent, but enzyme independent transfer of a beta-phosphate from a inositol pyrophosphate to a pre-phosphorylated serine residue.

It is found in the cytoplasm. Its subcellular location is the cytoskeleton. Its function is as follows. Acts as one of several non-catalytic accessory components of the cytoplasmic dynein 1 complex that are thought to be involved in linking dynein to cargos and to adapter proteins that regulate dynein function. Cytoplasmic dynein 1 acts as a motor for the intracellular retrograde motility of vesicles and organelles along microtubules. The intermediate chains mediate the binding of dynein to dynactin via its 150 kDa component (p150-glued) DCTN1. Involved in membrane-transport, such as Golgi apparatus, late endosomes and lysosomes. The chain is Cytoplasmic dynein 1 intermediate chain 2 (DYNC1I2) from Bos taurus (Bovine).